The following is a 255-amino-acid chain: BTB/POZ domain-containing protein KCTD14 (255 aa).

The disordered stretch occupies residues 1–29; it reads MWQGCAVERPVGRMTSQTPLPQSPRPRRP. In terms of domain architecture, BTB spans 33-130; that stretch reads TVVELNVGGE…LLEDMPQIFG (98 aa).

In Homo sapiens (Human), this protein is BTB/POZ domain-containing protein KCTD14 (KCTD14).